We begin with the raw amino-acid sequence, 438 residues long: 26S proteasome regulatory subunit 6A (438 aa).

Residues 1 to 24 (MSTLEELDALDQSQQGGSSNNEGL) are disordered. Residues 11–22 (DQSQQGGSSNNE) show a composition bias toward polar residues. 226–233 (GPPGTGKT) provides a ligand contact to ATP.

It belongs to the AAA ATPase family.

The protein localises to the cytoplasm. Its subcellular location is the nucleus. In terms of biological role, the 26S proteasome is involved in the ATP-dependent degradation of ubiquitinated proteins. The regulatory (or ATPase) complex confers ATP dependency and substrate specificity to the 26S complex. This Schizosaccharomyces pombe (strain 972 / ATCC 24843) (Fission yeast) protein is 26S proteasome regulatory subunit 6A (tbp1).